The primary structure comprises 100 residues: Co-chaperonin GroES (100 aa).

The protein belongs to the GroES chaperonin family. In terms of assembly, heptamer of 7 subunits arranged in a ring. Interacts with the chaperonin GroEL.

The protein localises to the cytoplasm. Its function is as follows. Together with the chaperonin GroEL, plays an essential role in assisting protein folding. The GroEL-GroES system forms a nano-cage that allows encapsulation of the non-native substrate proteins and provides a physical environment optimized to promote and accelerate protein folding. GroES binds to the apical surface of the GroEL ring, thereby capping the opening of the GroEL channel. This is Co-chaperonin GroES from Mycobacterium tuberculosis (strain CDC 1551 / Oshkosh).